The primary structure comprises 274 residues: 4-hydroxy-3-methylbut-2-enyl diphosphate reductase (274 aa).

Position 12 (C12) interacts with [4Fe-4S] cluster. H36 and H70 together coordinate (2E)-4-hydroxy-3-methylbut-2-enyl diphosphate. Residues H36 and H70 each coordinate dimethylallyl diphosphate. Residues H36 and H70 each contribute to the isopentenyl diphosphate site. C92 provides a ligand contact to [4Fe-4S] cluster. H120 serves as a coordination point for (2E)-4-hydroxy-3-methylbut-2-enyl diphosphate. H120 provides a ligand contact to dimethylallyl diphosphate. H120 contributes to the isopentenyl diphosphate binding site. E122 functions as the Proton donor in the catalytic mechanism. T158 contributes to the (2E)-4-hydroxy-3-methylbut-2-enyl diphosphate binding site. C186 contacts [4Fe-4S] cluster. (2E)-4-hydroxy-3-methylbut-2-enyl diphosphate-binding residues include S214, S215, N216, and S258. 4 residues coordinate dimethylallyl diphosphate: S214, S215, N216, and S258. Isopentenyl diphosphate is bound by residues S214, S215, N216, and S258.

This sequence belongs to the IspH family. The cofactor is [4Fe-4S] cluster.

The enzyme catalyses isopentenyl diphosphate + 2 oxidized [2Fe-2S]-[ferredoxin] + H2O = (2E)-4-hydroxy-3-methylbut-2-enyl diphosphate + 2 reduced [2Fe-2S]-[ferredoxin] + 2 H(+). It carries out the reaction dimethylallyl diphosphate + 2 oxidized [2Fe-2S]-[ferredoxin] + H2O = (2E)-4-hydroxy-3-methylbut-2-enyl diphosphate + 2 reduced [2Fe-2S]-[ferredoxin] + 2 H(+). The protein operates within isoprenoid biosynthesis; dimethylallyl diphosphate biosynthesis; dimethylallyl diphosphate from (2E)-4-hydroxy-3-methylbutenyl diphosphate: step 1/1. It functions in the pathway isoprenoid biosynthesis; isopentenyl diphosphate biosynthesis via DXP pathway; isopentenyl diphosphate from 1-deoxy-D-xylulose 5-phosphate: step 6/6. Catalyzes the conversion of 1-hydroxy-2-methyl-2-(E)-butenyl 4-diphosphate (HMBPP) into a mixture of isopentenyl diphosphate (IPP) and dimethylallyl diphosphate (DMAPP). Acts in the terminal step of the DOXP/MEP pathway for isoprenoid precursor biosynthesis. The polypeptide is 4-hydroxy-3-methylbut-2-enyl diphosphate reductase (Helicobacter pylori (strain P12)).